The following is a 74-amino-acid chain: Consomatin Gh1 (74 aa).

The first 22 residues, Met1–Gly22, serve as a signal peptide directing secretion. The propeptide occupies Gly23 to Arg57. Cys65 and Cys70 are disulfide-bonded. The residue at position 67 (Trp67) is a D-tryptophan. 4-hydroxyproline is present on residues Pro71, Pro72, and Pro74.

This sequence belongs to the conotoxin C superfamily. Consomatin family. In terms of tissue distribution, expressed by the venom duct.

Its subcellular location is the secreted. Moderately activates human somatostatin receptors (SSTR) with a preferential activation of SSTR1 and SSTR4. In vivo, does not cause behavioral changes in mice within a few minutes of intracranial injection, but causes a progressive loss of movement thereafter. Four to five hours after injection, mice recover, even with the highest dose tested. Shows antinociception and antihyperalgesia activities in two mouse models of acute pain, most probably by acting outside the central nervous system. This is Consomatin Gh1 from Conus grahami (Cone snail).